The primary structure comprises 349 residues: KH domain-containing, RNA-binding, signal transduction-associated protein 2 (349 aa).

The KH domain occupies 65 to 135 (LIPVKQYPKF…HLSDELHVLI (71 aa)). 2 disordered regions span residues 182-284 (EDSG…DDQT) and 319-349 (PEEW…YGRY). An omega-N-methylarginine mark is found at R230 and R240. Over residues 340–349 (GYREHPYGRY) the composition is skewed to basic and acidic residues.

This sequence belongs to the KHDRBS family. Self-associates to form homooligomers. Interacts with KHDRBS1/SAM68; heterooligomer formation of KHDRBS family proteins may modulate RNA substrate specificity. Interacts with RBMX. Interacts with SAFB, SFRS9 and YTHDC1. Interacts with FYN and PLCG1 (via SH3 domain). Interacts (phosphorylated) with FYN, GRB2, PLCG1 and RASA1 (via SH2 domain). Post-translationally, methylated. In terms of processing, tyrosine phosphorylated by FYN, PTK6 and SRC. Tyrosine phosphorylated by SRC during mitosis. In terms of tissue distribution, highly expressed in brain, lung, kidney and small intestine. Weakly expressed in placenta, liver, spleen, thymus, ovary and colon.

The protein localises to the nucleus. In terms of biological role, RNA-binding protein that plays a role in the regulation of alternative splicing and influences mRNA splice site selection and exon inclusion. Binds both poly(A) and poly(U) homopolymers. Phosphorylation by PTK6 inhibits its RNA-binding ability. Induces an increased concentration-dependent incorporation of exon in CD44 pre-mRNA by direct binding to purine-rich exonic enhancer. Can regulate alternative splicing of NRXN1 in the laminin G-like domain 6 containing the evolutionary conserved neurexin alternative spliced segment 4 (AS4) involved in neurexin selective targeting to postsynaptic partners. Regulates cell-type specific alternative splicing of NRXN1 at AS4 and acts synergystically with SAM68 in exon skipping. In contrast acts antagonistically with SAM68 in NRXN3 exon skipping at AS4. Its phosphorylation by FYN inhibits its ability to regulate splice site selection. May function as an adapter protein for Src kinases during mitosis. The polypeptide is KH domain-containing, RNA-binding, signal transduction-associated protein 2 (KHDRBS2) (Homo sapiens (Human)).